We begin with the raw amino-acid sequence, 598 residues long: Beta-fructofuranosidase, insoluble isoenzyme 2 (598 aa).

An N-terminal signal peptide occupies residues 1–25; that stretch reads MGVLGSRVAWAWLVQLLLLQQLAGA. Aspartate 69 is an active-site residue. 3 N-linked (GlcNAc...) asparagine glycosylation sites follow: asparagine 164, asparagine 189, and asparagine 348.

Belongs to the glycosyl hydrolase 32 family.

Its subcellular location is the secreted. The protein localises to the extracellular space. It is found in the apoplast. The protein resides in the cell wall. The catalysed reaction is Hydrolysis of terminal non-reducing beta-D-fructofuranoside residues in beta-D-fructofuranosides.. In terms of biological role, may play a role in sucrose partitioning during seed development. The polypeptide is Beta-fructofuranosidase, insoluble isoenzyme 2 (CIN2) (Oryza sativa subsp. indica (Rice)).